The chain runs to 374 residues: Peptide chain release factor 2 (374 aa).

Gln-250 is modified (N5-methylglutamine).

Belongs to the prokaryotic/mitochondrial release factor family. In terms of processing, methylated by PrmC. Methylation increases the termination efficiency of RF2.

Its subcellular location is the cytoplasm. Functionally, peptide chain release factor 2 directs the termination of translation in response to the peptide chain termination codons UGA and UAA. This chain is Peptide chain release factor 2, found in Roseobacter denitrificans (strain ATCC 33942 / OCh 114) (Erythrobacter sp. (strain OCh 114)).